The primary structure comprises 68 residues: MSGSSSVAAMKKVVQQLRLEAGLNRVKVSQAAADLKQFCLQNAQHDPLLTGVSSSTNPFRPQKVCSFL.

Position 2 is an N-acetylserine (S2). At S2 the chain carries Phosphoserine. C65 bears the Cysteine methyl ester mark. A lipid anchor (S-geranylgeranyl cysteine) is attached at C65. The propeptide at 66-68 (SFL) is removed in mature form.

This sequence belongs to the G protein gamma family. As to quaternary structure, g proteins are composed of 3 units, alpha, beta and gamma. Expressed in a variety of tissues.

It is found in the cell membrane. Guanine nucleotide-binding proteins (G proteins) are involved as a modulator or transducer in various transmembrane signaling systems. The beta and gamma chains are required for the GTPase activity, for replacement of GDP by GTP, and for G protein-effector interaction. The chain is Guanine nucleotide-binding protein G(I)/G(S)/G(O) subunit gamma-5 (GNG5) from Bos taurus (Bovine).